Reading from the N-terminus, the 178-residue chain is Crossover junction endodeoxyribonuclease RuvC (178 aa).

Catalysis depends on residues Asp7, Glu68, and Asp141. Asp7, Glu68, and Asp141 together coordinate Mg(2+).

It belongs to the RuvC family. Homodimer which binds Holliday junction (HJ) DNA. The HJ becomes 2-fold symmetrical on binding to RuvC with unstacked arms; it has a different conformation from HJ DNA in complex with RuvA. In the full resolvosome a probable DNA-RuvA(4)-RuvB(12)-RuvC(2) complex forms which resolves the HJ. Mg(2+) is required as a cofactor.

It is found in the cytoplasm. It carries out the reaction Endonucleolytic cleavage at a junction such as a reciprocal single-stranded crossover between two homologous DNA duplexes (Holliday junction).. Functionally, the RuvA-RuvB-RuvC complex processes Holliday junction (HJ) DNA during genetic recombination and DNA repair. Endonuclease that resolves HJ intermediates. Cleaves cruciform DNA by making single-stranded nicks across the HJ at symmetrical positions within the homologous arms, yielding a 5'-phosphate and a 3'-hydroxyl group; requires a central core of homology in the junction. The consensus cleavage sequence is 5'-(A/T)TT(C/G)-3'. Cleavage occurs on the 3'-side of the TT dinucleotide at the point of strand exchange. HJ branch migration catalyzed by RuvA-RuvB allows RuvC to scan DNA until it finds its consensus sequence, where it cleaves and resolves the cruciform DNA. This chain is Crossover junction endodeoxyribonuclease RuvC, found in Parafrankia sp. (strain EAN1pec).